The primary structure comprises 236 residues: 15,16-dihydrobiliverdin:ferredoxin oxidoreductase (236 aa).

It belongs to the HY2 family.

The enzyme catalyses 15,16-dihydrobiliverdin + oxidized 2[4Fe-4S]-[ferredoxin] = biliverdin IXalpha + reduced 2[4Fe-4S]-[ferredoxin] + 2 H(+). In terms of biological role, catalyzes the two-electron reduction of biliverdin IX-alpha at the C15 methine bridge. The sequence is that of 15,16-dihydrobiliverdin:ferredoxin oxidoreductase (pebA) from Synechococcus sp. (strain WH8020).